A 205-amino-acid chain; its full sequence is Meiotic nuclear division protein 1 homolog (205 aa).

Position 2 is an N-acetylserine (Ser-2). Positions 84-173 (HKLEVLESQL…EAANRWTDNI (90 aa)) form a coiled coil.

Belongs to the MND1 family. In terms of assembly, heterodimer with PSMC3IP/HOP2. MND1-PSMC3IP interacts with DMC1 and RAD51 and binds preferentially to dsDNA.

The protein localises to the nucleus. In terms of biological role, required for proper homologous chromosome pairing and efficient cross-over and intragenic recombination during meiosis. Stimulates both DMC1- and RAD51-mediated homologous strand assimilation, which is required for the resolution of meiotic double-strand breaks. The protein is Meiotic nuclear division protein 1 homolog of Homo sapiens (Human).